The following is a 423-amino-acid chain: GTPase HflX (423 aa).

The Hflx-type G domain occupies 201 to 363 (IQLALVGYTN…KIEQALKGMM (163 aa)). GTP contacts are provided by residues 207 to 214 (GYTNAGKS), 232 to 236 (FATLD), 254 to 257 (DTVG), 320 to 323 (NKAD), and 341 to 343 (SAY). Mg(2+) contacts are provided by serine 214 and threonine 234.

The protein belongs to the TRAFAC class OBG-HflX-like GTPase superfamily. HflX GTPase family. In terms of assembly, monomer. Associates with the 50S ribosomal subunit. It depends on Mg(2+) as a cofactor.

The protein resides in the cytoplasm. GTPase that associates with the 50S ribosomal subunit and may have a role during protein synthesis or ribosome biogenesis. The sequence is that of GTPase HflX from Alkalihalophilus pseudofirmus (strain ATCC BAA-2126 / JCM 17055 / OF4) (Bacillus pseudofirmus).